The sequence spans 392 residues: Nicotinate phosphoribosyltransferase (392 aa).

A Phosphohistidine; by autocatalysis modification is found at histidine 214.

This sequence belongs to the NAPRTase family. Transiently phosphorylated on a His residue during the reaction cycle. Phosphorylation strongly increases the affinity for substrates and increases the rate of nicotinate D-ribonucleotide production. Dephosphorylation regenerates the low-affinity form of the enzyme, leading to product release.

The enzyme catalyses nicotinate + 5-phospho-alpha-D-ribose 1-diphosphate + ATP + H2O = nicotinate beta-D-ribonucleotide + ADP + phosphate + diphosphate. It functions in the pathway cofactor biosynthesis; NAD(+) biosynthesis; nicotinate D-ribonucleotide from nicotinate: step 1/1. In terms of biological role, catalyzes the synthesis of beta-nicotinate D-ribonucleotide from nicotinate and 5-phospho-D-ribose 1-phosphate at the expense of ATP. The sequence is that of Nicotinate phosphoribosyltransferase from Xanthomonas euvesicatoria pv. vesicatoria (strain 85-10) (Xanthomonas campestris pv. vesicatoria).